Here is a 196-residue protein sequence, read N- to C-terminus: Dephospho-CoA kinase (196 aa).

A DPCK domain is found at 5-196; the sequence is IIGLTGGIAT…QVDIALNFEL (192 aa). 13 to 18 contacts ATP; that stretch reads ATGKTT.

It belongs to the CoaE family.

It is found in the cytoplasm. The enzyme catalyses 3'-dephospho-CoA + ATP = ADP + CoA + H(+). The protein operates within cofactor biosynthesis; coenzyme A biosynthesis; CoA from (R)-pantothenate: step 5/5. In terms of biological role, catalyzes the phosphorylation of the 3'-hydroxyl group of dephosphocoenzyme A to form coenzyme A. This is Dephospho-CoA kinase from Trichormus variabilis (strain ATCC 29413 / PCC 7937) (Anabaena variabilis).